Here is a 458-residue protein sequence, read N- to C-terminus: ATP synthase subunit beta (458 aa).

148–155 (GGAGVGKT) contacts ATP.

This sequence belongs to the ATPase alpha/beta chains family. As to quaternary structure, F-type ATPases have 2 components, CF(1) - the catalytic core - and CF(0) - the membrane proton channel. CF(1) has five subunits: alpha(3), beta(3), gamma(1), delta(1), epsilon(1). CF(0) has three main subunits: a(1), b(2) and c(9-12). The alpha and beta chains form an alternating ring which encloses part of the gamma chain. CF(1) is attached to CF(0) by a central stalk formed by the gamma and epsilon chains, while a peripheral stalk is formed by the delta and b chains.

It is found in the cell inner membrane. The enzyme catalyses ATP + H2O + 4 H(+)(in) = ADP + phosphate + 5 H(+)(out). Produces ATP from ADP in the presence of a proton gradient across the membrane. The catalytic sites are hosted primarily by the beta subunits. This chain is ATP synthase subunit beta, found in Pseudomonas putida (strain GB-1).